Here is a 310-residue protein sequence, read N- to C-terminus: Ribosomal RNA small subunit methyltransferase H (310 aa).

S-adenosyl-L-methionine is bound by residues 32 to 34, D51, F78, D99, and Q106; that span reads AGH.

It belongs to the methyltransferase superfamily. RsmH family.

It localises to the cytoplasm. It catalyses the reaction cytidine(1402) in 16S rRNA + S-adenosyl-L-methionine = N(4)-methylcytidine(1402) in 16S rRNA + S-adenosyl-L-homocysteine + H(+). Its function is as follows. Specifically methylates the N4 position of cytidine in position 1402 (C1402) of 16S rRNA. The chain is Ribosomal RNA small subunit methyltransferase H from Macrococcus caseolyticus (strain JCSC5402) (Macrococcoides caseolyticum).